The sequence spans 265 residues: Phosphate import ATP-binding protein PstB (265 aa).

One can recognise an ABC transporter domain in the interval 18-260 (ISARDVQVFY…PEDPRTESYI (243 aa)). Residue 50-57 (GPSGCGKS) coordinates ATP.

Belongs to the ABC transporter superfamily. Phosphate importer (TC 3.A.1.7) family. In terms of assembly, the complex is composed of two ATP-binding proteins (PstB), two transmembrane proteins (PstC and PstA) and a solute-binding protein (PstS).

The protein localises to the cell inner membrane. The enzyme catalyses phosphate(out) + ATP + H2O = ADP + 2 phosphate(in) + H(+). In terms of biological role, part of the ABC transporter complex PstSACB involved in phosphate import. Responsible for energy coupling to the transport system. This Roseobacter denitrificans (strain ATCC 33942 / OCh 114) (Erythrobacter sp. (strain OCh 114)) protein is Phosphate import ATP-binding protein PstB.